The sequence spans 157 residues: Arginine repressor (157 aa).

It belongs to the ArgR family.

Its subcellular location is the cytoplasm. The protein operates within amino-acid biosynthesis; L-arginine biosynthesis [regulation]. In terms of biological role, regulates arginine biosynthesis genes. The chain is Arginine repressor from Bacteroides fragilis (strain ATCC 25285 / DSM 2151 / CCUG 4856 / JCM 11019 / LMG 10263 / NCTC 9343 / Onslow / VPI 2553 / EN-2).